The chain runs to 91 residues: Large ribosomal subunit protein bL27 (91 aa).

A disordered region spans residues 1–22 (MAHKKGQGSSRNGRDSNPQYRG). A compositionally biased stretch (polar residues) spans 7–19 (QGSSRNGRDSNPQ).

This sequence belongs to the bacterial ribosomal protein bL27 family.

In Myxococcus xanthus (strain DK1622), this protein is Large ribosomal subunit protein bL27.